A 116-amino-acid polypeptide reads, in one-letter code: HTH-type transcriptional regulator SarV (116 aa).

The H-T-H motif DNA-binding region spans 51–74; the sequence is RDTLHFEMLWDTSKIDVIIRKIYK.

Belongs to the SarA family.

It localises to the cytoplasm. In terms of biological role, part of the pathway by which MgrA and SarA control autolysis. The sequence is that of HTH-type transcriptional regulator SarV (sarV) from Staphylococcus aureus (strain Mu50 / ATCC 700699).